The following is a 350-amino-acid chain: Inhibin beta E chain (350 aa).

The N-terminal stretch at 1–19 is a signal peptide; the sequence is MRLPDVQLWLVLLWALVRA. Residues 20–236 constitute a propeptide that is removed on maturation; that stretch reads QGTGSVCPSC…EPGAGRARRR (217 aa). N-linked (GlcNAc...) asparagine glycosylation occurs at Asn198. 4 disulfides stabilise this stretch: Cys240–Cys248, Cys247–Cys315, Cys276–Cys347, and Cys280–Cys349.

It belongs to the TGF-beta family. Homodimeric or heterodimeric through association with alpha and beta subunits, linked by one or more disulfide bonds. Inhibins are heterodimers of one alpha and one beta subunit. Activins are homo- or heterodimers of beta subunits only.

It is found in the secreted. In terms of biological role, inhibins and activins inhibit and activate, respectively, the secretion of follitropin by the pituitary gland. Inhibins/activins are involved in regulating a number of diverse functions such as hypothalamic and pituitary hormone secretion, gonadal hormone secretion, germ cell development and maturation, erythroid differentiation, insulin secretion, nerve cell survival, embryonic axial development or bone growth, depending on their subunit composition. Inhibins appear to oppose the functions of activins. Activin E is a homodimer of INHBE secreted by the liver that plays a crucial role in regulating metabolic homeostasis particularly in lipid metabolism and energy homeostasis. Plays a central role in the regulation of adipose tissue lipolysis by preventing the influx of fatty acids from adipose tissue into the liver. Mechanistically, signals via ACVR1C to activate SMAD2/3 signaling, suppressing PPARG target genes in adipose tissue, thereby reducing liver lipid content and improving glycemic control. Induces beige adipocyte formation and thermogenesis in response to cold exposure. In Homo sapiens (Human), this protein is Inhibin beta E chain (INHBE).